Here is a 360-residue protein sequence, read N- to C-terminus: 3-dehydroquinate synthase (360 aa).

NAD(+) contacts are provided by residues 71 to 76 (DGEAHK), 105 to 109 (GVVGD), 129 to 130 (TT), Lys-142, and Lys-151. The Zn(2+) site is built by Glu-184, His-247, and His-264.

It belongs to the sugar phosphate cyclases superfamily. Dehydroquinate synthase family. Co(2+) is required as a cofactor. Zn(2+) serves as cofactor. Requires NAD(+) as cofactor.

It localises to the cytoplasm. The enzyme catalyses 7-phospho-2-dehydro-3-deoxy-D-arabino-heptonate = 3-dehydroquinate + phosphate. It functions in the pathway metabolic intermediate biosynthesis; chorismate biosynthesis; chorismate from D-erythrose 4-phosphate and phosphoenolpyruvate: step 2/7. In terms of biological role, catalyzes the conversion of 3-deoxy-D-arabino-heptulosonate 7-phosphate (DAHP) to dehydroquinate (DHQ). The sequence is that of 3-dehydroquinate synthase from Azoarcus sp. (strain BH72).